We begin with the raw amino-acid sequence, 266 residues long: Glutamate racemase (266 aa).

Residues 9–10 and 41–42 contribute to the substrate site; these read DS and YG. The active-site Proton donor/acceptor is cysteine 72. Residue 73–74 participates in substrate binding; the sequence is NT. Cysteine 184 (proton donor/acceptor) is an active-site residue. 185-186 provides a ligand contact to substrate; it reads TH.

This sequence belongs to the aspartate/glutamate racemases family. As to quaternary structure, homodimer.

The catalysed reaction is L-glutamate = D-glutamate. Its pathway is cell wall biogenesis; peptidoglycan biosynthesis. Provides the (R)-glutamate required for cell wall biosynthesis. This chain is Glutamate racemase, found in Staphylococcus aureus (strain MRSA252).